The following is a 293-amino-acid chain: Ribosomal protein L11 methyltransferase (293 aa).

S-adenosyl-L-methionine contacts are provided by Thr-145, Gly-166, Asp-188, and Asn-230.

This sequence belongs to the methyltransferase superfamily. PrmA family.

Its subcellular location is the cytoplasm. It catalyses the reaction L-lysyl-[protein] + 3 S-adenosyl-L-methionine = N(6),N(6),N(6)-trimethyl-L-lysyl-[protein] + 3 S-adenosyl-L-homocysteine + 3 H(+). In terms of biological role, methylates ribosomal protein L11. The polypeptide is Ribosomal protein L11 methyltransferase (Edwardsiella ictaluri (strain 93-146)).